The chain runs to 447 residues: Transcriptional enhancer factor TEF-4 (447 aa).

Disordered stretches follow at residues 1-46 (MGEP…GVWS) and 183-218 (TPFT…PPAW). Over residues 11–20 (DDGSGWTGSE) the composition is skewed to low complexity. Residues 25–40 (EGTGGSEGAGGDGGPD) show a composition bias toward gly residues. The TEA DNA-binding region spans 38-114 (GPDAEGVWSP…QVLARRKSRE (77 aa)). The transcriptional activation stretch occupies residues 172–447 (WNVPDVKPFS…QHHIYRLVRD (276 aa)). Low complexity predominate over residues 183–206 (TPFTLSLTPPSTDLPGYEPPQALS). Positions 207–216 (PLPPPTPSPP) are enriched in pro residues.

Interacts with YAP1 and WWTR1/TAZ.

The protein resides in the nucleus. In terms of biological role, transcription factor which plays a key role in the Hippo signaling pathway, a pathway involved in organ size control and tumor suppression by restricting proliferation and promoting apoptosis. The core of this pathway is composed of a kinase cascade wherein MST1/MST2, in complex with its regulatory protein SAV1, phosphorylates and activates LATS1/2 in complex with its regulatory protein MOB1, which in turn phosphorylates and inactivates YAP1 oncoprotein and WWTR1/TAZ. Acts by mediating gene expression of YAP1 and WWTR1/TAZ, thereby regulating cell proliferation, migration and epithelial mesenchymal transition (EMT) induction. Binds to the SPH and GT-IIC 'enhansons' (5'-GTGGAATGT-3'). May be involved in the gene regulation of neural development. Binds to the M-CAT motif. The protein is Transcriptional enhancer factor TEF-4 (TEAD2) of Homo sapiens (Human).